The primary structure comprises 454 residues: tRNA modification GTPase MnmE (454 aa).

(6S)-5-formyl-5,6,7,8-tetrahydrofolate is bound by residues Arg23, Glu80, and Lys120. A TrmE-type G domain is found at 216 to 377; the sequence is GMKVVIAGRP…LRDHLKQSMG (162 aa). K(+) is bound at residue Asn226. GTP contacts are provided by residues 226 to 231, 245 to 251, 270 to 273, 335 to 338, and 358 to 360; these read NAGKSS, TDIAGTT, DTAG, NKAD, and SAR. Ser230 is a Mg(2+) binding site. K(+) is bound by residues Thr245, Ile247, and Thr250. Thr251 lines the Mg(2+) pocket. Lys454 serves as a coordination point for (6S)-5-formyl-5,6,7,8-tetrahydrofolate.

It belongs to the TRAFAC class TrmE-Era-EngA-EngB-Septin-like GTPase superfamily. TrmE GTPase family. As to quaternary structure, homodimer. Heterotetramer of two MnmE and two MnmG subunits. K(+) serves as cofactor.

The protein localises to the cytoplasm. Exhibits a very high intrinsic GTPase hydrolysis rate. Involved in the addition of a carboxymethylaminomethyl (cmnm) group at the wobble position (U34) of certain tRNAs, forming tRNA-cmnm(5)s(2)U34. The protein is tRNA modification GTPase MnmE of Yersinia pseudotuberculosis serotype O:3 (strain YPIII).